The following is a 214-amino-acid chain: Probable transaldolase (214 aa).

The active-site Schiff-base intermediate with substrate is K83.

Belongs to the transaldolase family. Type 3B subfamily.

Its subcellular location is the cytoplasm. The enzyme catalyses D-sedoheptulose 7-phosphate + D-glyceraldehyde 3-phosphate = D-erythrose 4-phosphate + beta-D-fructose 6-phosphate. The protein operates within carbohydrate degradation; pentose phosphate pathway; D-glyceraldehyde 3-phosphate and beta-D-fructose 6-phosphate from D-ribose 5-phosphate and D-xylulose 5-phosphate (non-oxidative stage): step 2/3. Functionally, transaldolase is important for the balance of metabolites in the pentose-phosphate pathway. This chain is Probable transaldolase, found in Dictyoglomus turgidum (strain DSM 6724 / Z-1310).